The sequence spans 720 residues: Dedicator of cytokinesis protein 9 (720 aa).

The DOCKER domain maps to 186-638 (KSYASTPELR…LSDIIVPRIC (453 aa)). The interaction with CDC42 stretch occupies residues 277-638 (DEEASMMEDV…LSDIIVPRIC (362 aa)).

Belongs to the DOCK family. As to quaternary structure, homodimer. Interacts preferentially with nucleotide-depleted CDC42.

It localises to the endomembrane system. Functionally, guanine nucleotide-exchange factor (GEF) that activates CDC42 by exchanging bound GDP for free GTP. Overexpression induces filopodia formation. The sequence is that of Dedicator of cytokinesis protein 9 (Dock9) from Rattus norvegicus (Rat).